Here is a 558-residue protein sequence, read N- to C-terminus: Proline--tRNA ligase (558 aa).

It belongs to the class-II aminoacyl-tRNA synthetase family. ProS type 1 subfamily. As to quaternary structure, homodimer.

The protein localises to the cytoplasm. The enzyme catalyses tRNA(Pro) + L-proline + ATP = L-prolyl-tRNA(Pro) + AMP + diphosphate. Functionally, catalyzes the attachment of proline to tRNA(Pro) in a two-step reaction: proline is first activated by ATP to form Pro-AMP and then transferred to the acceptor end of tRNA(Pro). As ProRS can inadvertently accommodate and process non-cognate amino acids such as alanine and cysteine, to avoid such errors it has two additional distinct editing activities against alanine. One activity is designated as 'pretransfer' editing and involves the tRNA(Pro)-independent hydrolysis of activated Ala-AMP. The other activity is designated 'posttransfer' editing and involves deacylation of mischarged Ala-tRNA(Pro). The misacylated Cys-tRNA(Pro) is not edited by ProRS. This Coprothermobacter proteolyticus (strain ATCC 35245 / DSM 5265 / OCM 4 / BT) protein is Proline--tRNA ligase.